The following is a 355-amino-acid chain: Protein-tyrosine sulfotransferase 1 (355 aa).

Residues 1–8 lie on the Cytoplasmic side of the membrane; the sequence is MIGKLKQN. Residues 9-25 traverse the membrane as a helical; Signal-anchor for type II membrane protein segment; sequence LLVACLVISSVTVFYLC. The Lumenal segment spans residues 26–355; the sequence is RHAMDCHHRI…QKSPEKPNPS (330 aa). Asn55 carries N-linked (GlcNAc...) asparagine glycosylation. Residue 76-80 participates in 3'-phosphoadenylyl sulfate binding; the sequence is RSGTT. Cysteines 94 and 154 form a disulfide. Glu97 functions as the Proton donor/acceptor in the catalytic mechanism. Residues 99-103 are interaction with peptide substrate; the sequence is RVIPR. Arg181, Ser189, and Arg193 together coordinate 3'-phosphoadenylyl sulfate. Cys223 and Cys230 form a disulfide bridge. 3'-phosphoadenylyl sulfate-binding positions include Tyr235, 282 to 291, and Lys297; that span reads STDQVIKPVN. Positions 325-355 are disordered; sequence HANPPNYGRPDPLVLDNTRRLQKSPEKPNPS. The span at 341–355 shows a compositional bias: basic and acidic residues; the sequence is NTRRLQKSPEKPNPS.

Belongs to the protein sulfotransferase family.

The protein localises to the golgi apparatus membrane. The enzyme catalyses L-tyrosyl-[protein] + 3'-phosphoadenylyl sulfate = O-sulfo-L-tyrosine-[protein] + adenosine 3',5'-bisphosphate + H(+). In terms of biological role, catalyzes the O-sulfation of tyrosine residues within acidic motifs of polypeptides, using 3'-phosphoadenylyl sulfate (PAPS) as cosubstrate. The protein is Protein-tyrosine sulfotransferase 1 (tpst1) of Danio rerio (Zebrafish).